Reading from the N-terminus, the 92-residue chain is Large ribosomal subunit protein bL25 (92 aa).

Belongs to the bacterial ribosomal protein bL25 family. Part of the 50S ribosomal subunit; part of the 5S rRNA/L5/L18/L25 subcomplex. Contacts the 5S rRNA. Binds to the 5S rRNA independently of L5 and L18.

This is one of the proteins that binds to the 5S RNA in the ribosome where it forms part of the central protuberance. This Vibrio atlanticus (strain LGP32) (Vibrio splendidus (strain Mel32)) protein is Large ribosomal subunit protein bL25.